The following is a 238-amino-acid chain: MSKAAPAKKPVAVAPAPGCTLDINDPQVQSAAIRIQASYRGHRSRKELREKGPPRVLEPLKDVVLIEGSAAKLTCRISAFPDPFIRWSKDGKELRDGPKYRYVFEDPDVVALVVRDGELADLGQYSINVTNPFGQCSDSARILVEVPTKIQKGPDNTKARKGTTVTLTAEILGEPAPDVGWTKDGEDIEEDDRVFFEIGSTTTTLTIRRATPQDSGKYEVYVENSLGMDQSFARVDVA.

Residues 29–55 (QSAAIRIQASYRGHRSRKELREKGPPR) form the IQ domain. Ig-like domains are found at residues 54–143 (PRVL…ARIL) and 147–236 (PTKI…ARVD).

The polypeptide is SPEG neighbor protein (Homo sapiens (Human)).